Reading from the N-terminus, the 141-residue chain is Protein X (141 aa).

The tract at residues 22-52 (GPQSSGPPFPRPAAGSAASSASSPSPSDESD) is disordered. Residues 33 to 48 (PAAGSAASSASSPSPS) show a composition bias toward low complexity. Positions 68-113 (PCCLVFTCADLRTMDSTVNFVSWHAKRQLGMPSKDLWTPYIKDQLL) are mitochondrial targeting sequence.

This sequence belongs to the orthohepadnavirus protein X family. In terms of assembly, may form homodimer. May interact with host CEBPA, CFLAR, CREB1, DDB1, E4F1, HBXIP, HSPD1/HSP60, NFKBIA, POLR2E and SMAD4. Interacts with host SMC5-SMC6 complex and induces its degradation. Interacts with host TRPC4AP; leading to prevent ubiquitination of TRPC4AP. Interacts with host PLSCR1; this interaction promotes ubiquitination and degradation of HBx and impairs HBx-mediated cell proliferation. A fraction may be phosphorylated in insect cells and HepG2 cells, a human hepatoblastoma cell line. Phosphorylated in vitro by host protein kinase C or mitogen-activated protein kinase. N-acetylated in insect cells.

It is found in the host cytoplasm. The protein resides in the host nucleus. It localises to the host mitochondrion. In terms of biological role, multifunctional protein that plays a role in silencing host antiviral defenses and promoting viral transcription. Does not seem to be essential for HBV infection. May be directly involved in development of cirrhosis and liver cancer (hepatocellular carcinoma). Most of cytosolic activities involve modulation of cytosolic calcium. The effect on apoptosis is controversial depending on the cell types in which the studies have been conducted. May induce apoptosis by localizing in mitochondria and causing loss of mitochondrial membrane potential. May also modulate apoptosis by binding host CFLAR, a key regulator of the death-inducing signaling complex (DISC). Promotes viral transcription by using the host E3 ubiquitin ligase DDB1 to target the SMC5-SMC6 complex to proteasomal degradation. This host complex would otherwise bind to viral episomal DNA, and prevents its transcription. Moderately stimulates transcription of many different viral and cellular transcription elements. Promoters and enhancers stimulated by HBx contain DNA binding sites for NF-kappa-B, AP-1, AP-2, c-EBP, ATF/CREB, or the calcium-activated factor NF-AT. The protein is Protein X of Woodchuck hepatitis B virus (isolate w64/pWS23) (WHV).